A 238-amino-acid chain; its full sequence is Opacity protein opA68 (238 aa).

A signal peptide is located at residue Ala1. Residues 88–109 are disordered; the sequence is NLQRRTSNGNRRDRKTENQENG.

The protein belongs to the opacity porin family.

It is found in the cell outer membrane. Its function is as follows. Implicated in a number of adherence functions. OPA proteins are implicated in pathogenesis and are subject to phase variation. The sequence is that of Opacity protein opA68 from Neisseria gonorrhoeae.